Consider the following 80-residue polypeptide: Cell division activator CedA (80 aa).

This sequence belongs to the CedA family.

Its function is as follows. Activates the cell division inhibited by chromosomal DNA over-replication. The polypeptide is Cell division activator CedA (Citrobacter koseri (strain ATCC BAA-895 / CDC 4225-83 / SGSC4696)).